Here is a 320-residue protein sequence, read N- to C-terminus: Short-chain dehydrogenase/reductase ATR7 (320 aa).

NADP(+) is bound by residues serine 32, isoleucine 34, glutamine 55, aspartate 70, asparagine 93, lysine 134, tyrosine 167, lysine 171, and threonine 202. The active-site Proton acceptor is tyrosine 167. The Lowers pKa of active site Tyr role is filled by lysine 171.

It belongs to the short-chain dehydrogenases/reductases (SDR) family.

Its pathway is mycotoxin biosynthesis. Short-chain dehydrogenase/reductase; part of the core atranone cluster (CAC) which products are predicted to catalyze most or all steps of mycotoxin atranone synthesis, starting from geranylgeranyl pyrophosphate (GGPP). The initial cyclization of GGPP to dolabellane is probably performed by the terpene cyclase ATR13. The Baeyer-Villiger oxidation near the end of the atranone synthesis, which converts atranones D and E to atranones F and G is predicted to be catalyzed by the monooxygenase ATR8. Of the CAC's other predicted gene products, the reducing PKS ATR6 might synthesize a polyketide chain. This polyketide is probably transferred onto the atranone backbone by the polyketide transferase ATR5. Other predicted CAC products include 4 oxygenases (ATR2, ATR3, ATR4, and ATR14), 3 short-chain reductases (ATR7, ATR9, and ATR10), and a methyltransferase (ATR12). These may all be involved in the various steps of atranone biosynthesis, although their specific roles must await experimental determination. This chain is Short-chain dehydrogenase/reductase ATR7, found in Stachybotrys chlorohalonatus (strain IBT 40285).